The following is a 353-amino-acid chain: DNA integrity scanning protein DisA (353 aa).

Positions 6 to 144 (DKELMNILKI…GGIKYVLRDS (139 aa)) constitute a DAC domain. ATP is bound by residues glycine 73, leucine 91, and 104–108 (TRHRT).

Belongs to the DisA family. In terms of assembly, homooctamer. It depends on Mg(2+) as a cofactor.

It catalyses the reaction 2 ATP = 3',3'-c-di-AMP + 2 diphosphate. In terms of biological role, participates in a DNA-damage check-point that is active prior to asymmetric division when DNA is damaged. DisA forms globular foci that rapidly scan along the chromosomes during sporulation, searching for lesions. When a lesion is present, DisA pauses at the lesion site. This triggers a cellular response that culminates in a temporary block in sporulation initiation. Its function is as follows. Also has diadenylate cyclase activity, catalyzing the condensation of 2 ATP molecules into cyclic di-AMP (c-di-AMP). c-di-AMP acts as a signaling molecule that couples DNA integrity with progression of sporulation. The rise in c-di-AMP level generated by DisA while scanning the chromosome, operates as a positive signal that advances sporulation; upon encountering a lesion, the DisA focus arrests at the damaged site and halts c-di-AMP synthesis. In Clostridium botulinum (strain Loch Maree / Type A3), this protein is DNA integrity scanning protein DisA.